Here is a 304-residue protein sequence, read N- to C-terminus: MASNLPVRSFSEVCCAEARAAIIQMENNPDETVCNRIWKIHRDLQSSDLTTTVQVMMVYRFISKRVPEGCFAILSGVNTGMYNPRELKRSYVQSLSSGTSCEFLRSLDKLAKNLLAVHVCSDVKMSLNKRQVIDFISGEEDPTLHTAEHLTSLALDDSPSAVVYSGWQQEAIKLHNTIRKIATMRPADCKAGKFYSDILSACDQTKELLDAFDQGKLAYDRDVVLIGWMDEIIKIFSKPDYLEAKGVSYQVLKNVSNKVALLRESIWWVTELDGREYLFFDESWYLHGMSAFSDGVPGYEDFIY.

In terms of biological role, blocks host IRF3 and IRF7, thereby inhibiting IFN-beta expression and activation of host antiviral state. This chain is Protein ML, found in Thogoto virus (isolate SiAr 126) (Tho).